The primary structure comprises 209 residues: Glutathione S-transferase 1, isoform C (209 aa).

A GST N-terminal domain is found at 1–80; it reads MDFYYLPGSA…YLAEKYGKDD (80 aa). Glutathione-binding positions include serine 9, 50–52, and 64–66; these read HCI and ESR. The GST C-terminal domain maps to 86 to 207; that stretch reads DPQKRAVVNQ…AGIEEFKKYF (122 aa).

Belongs to the GST superfamily. Theta family. In terms of assembly, homodimer.

It carries out the reaction RX + glutathione = an S-substituted glutathione + a halide anion + H(+). It catalyses the reaction 1,1,1-trichloro-2,2-bis(4-chlorophenyl)ethane = 1,1-dichloro-2,2-bis(4-chlorophenyl)ethylene + chloride + H(+). Its function is as follows. Conjugation of reduced glutathione to a wide number of exogenous and endogenous hydrophobic electrophiles. Has DDT dehydrochlorinase activity. This chain is Glutathione S-transferase 1, isoform C (GstD1), found in Anopheles gambiae (African malaria mosquito).